A 485-amino-acid chain; its full sequence is Glutamyl-tRNA(Gln) amidotransferase subunit A (485 aa).

Catalysis depends on charge relay system residues Lys78 and Ser153. The active-site Acyl-ester intermediate is Ser177.

It belongs to the amidase family. GatA subfamily. As to quaternary structure, heterotrimer of A, B and C subunits.

It catalyses the reaction L-glutamyl-tRNA(Gln) + L-glutamine + ATP + H2O = L-glutaminyl-tRNA(Gln) + L-glutamate + ADP + phosphate + H(+). Its function is as follows. Allows the formation of correctly charged Gln-tRNA(Gln) through the transamidation of misacylated Glu-tRNA(Gln) in organisms which lack glutaminyl-tRNA synthetase. The reaction takes place in the presence of glutamine and ATP through an activated gamma-phospho-Glu-tRNA(Gln). The protein is Glutamyl-tRNA(Gln) amidotransferase subunit A of Bacillus cereus (strain ATCC 10987 / NRS 248).